The sequence spans 710 residues: MSAPATDLSAGAPSGRRQILVTSALPYANGQIHIGHLVEYIQTDIWVRTLRMHGHEVYYVGADDTHGTPVMLRAEKEGLTPKQLIDRVWQEHKRDFDSFGISFDNYYSTDSEENRVLSENVYLALKEAGLIDARDIEQAYDPVKEMFLPDRFIKGECPKCGAKDQYGDSCEVCGSTYLPTELINPYSVVSGATPVRKTSTHYFFRLSDPRCENFLRAWVGGLAQPEATNKMREWLGDAGEAKLADWDISRDAPYFGFEIPGAPGKYFYVWLDAPVGYYASFKNLAEKRGLDFDAWVRKGSKAEQYHFIGKDILYFHTLFWPAMLEFSGHRTPTNVFAHGFLTVDGAKMSKSRGTFITAQSVIETGLNPEWLRYYFAAKLNSTMEDLDLNLDDFQARVNSDLVGKYVNIASRAAGFLIKRFDGRVQDSAMQHPLLASLRAAVPQIAANYEAREYNRALRQTMELADAVNAYVDTAKPWDQAKDPANGVALHETCSVSIEAFRLLSLALKPVLPKLAEAVEGFLAIQPLVWADANVPLSSTRPINAYKHLMTRVDPKQIEALLAANRDSLQATPEAAAPADAKGKSKAAKAAAGKDETPGIISIDDFAKIDLRIAKIVDCKAVEGSDKLLQLTLDVGEEKTRNVFSGIKSAYQPEQLVGKLTVMVANLAPRKMKFGLSEGMVLAASATDEKAEPGLYVLEPDSGAKPGMRVK.

The short motif at proline 26 to histidine 36 is the 'HIGH' region element. Cysteine 157, cysteine 160, cysteine 170, and cysteine 173 together coordinate Zn(2+). The 'KMSKS' region signature appears at lysine 347 to serine 351. Lysine 350 contributes to the ATP binding site. A tRNA-binding domain is found at aspartate 604–lysine 710.

It belongs to the class-I aminoacyl-tRNA synthetase family. MetG type 1 subfamily. As to quaternary structure, homodimer. The cofactor is Zn(2+).

Its subcellular location is the cytoplasm. It carries out the reaction tRNA(Met) + L-methionine + ATP = L-methionyl-tRNA(Met) + AMP + diphosphate. Is required not only for elongation of protein synthesis but also for the initiation of all mRNA translation through initiator tRNA(fMet) aminoacylation. The chain is Methionine--tRNA ligase from Paraburkholderia xenovorans (strain LB400).